Here is an 858-residue protein sequence, read N- to C-terminus: Heat shock protein 105 kDa (858 aa).

Residue serine 2 is modified to N-acetylserine. Lysine 471 carries the post-translational modification N6-acetyllysine. 2 disordered regions span residues lysine 500 to alanine 585 and valine 801 to aspartate 858. Positions glutamate 504 to methionine 515 are enriched in acidic residues. 2 positions are modified to phosphoserine: serine 509 and serine 510. The span at glutamine 533–glycine 549 shows a compositional bias: polar residues. At serine 558 the chain carries Phosphoserine. Basic and acidic residues-rich tracts occupy residues glutamate 564–alanine 585 and proline 806–arginine 815. Serine 810 carries the post-translational modification Phosphoserine. A Phosphothreonine modification is found at threonine 816. The segment covering leucine 822–phenylalanine 834 has biased composition (basic and acidic residues).

Belongs to the heat shock protein 70 family. In terms of assembly, interacts with HSPA8/HSC70. Interacts with HSPA1A (via NBD) and HSPA1B (via NBD). Phosphorylation on Ser-509 may be important for regulation of the HSPA8/HSC70 chaperone activity. As to expression, predominantly expressed in the brain and also found in the liver.

It localises to the cytoplasm. In terms of biological role, acts as a nucleotide-exchange factor (NEF) for chaperone proteins HSPA1A and HSPA1B, promoting the release of ADP from HSPA1A/B thereby triggering substrate release. Prevents the aggregation of denatured proteins in cells under severe stress, on which the ATP levels decrease markedly. Inhibits HSPA8/HSC70 ATPase and chaperone activities. This Cricetulus griseus (Chinese hamster) protein is Heat shock protein 105 kDa (HSPH1).